The sequence spans 341 residues: Transcription factor ETV7 (341 aa).

Positions 33–117 (NLLGEGGICK…ELLQYIKTQR (85 aa)) constitute a PNT domain. The ETS DNA-binding region spans 224-305 (RLLWDYVYQL…PGQKLLFRFL (82 aa)). The disordered stretch occupies residues 315–341 (KHSHLEPLESQEQDRIEFKDKRPEISP).

This sequence belongs to the ETS family. As to expression, expressed in hematopoietic tissues.

Its subcellular location is the nucleus. In terms of biological role, transcriptional repressor; binds to the DNA sequence 5'-CCGGAAGT-3'. Isoform A does not seem to have a repressor activity. Isoform C does not seem to have a repressor activity. The chain is Transcription factor ETV7 (ETV7) from Homo sapiens (Human).